The chain runs to 211 residues: Guanylate kinase (211 aa).

The Guanylate kinase-like domain maps to 7-185; it reads GLLIVVTGPS…AVAELRAIIM (179 aa). An ATP-binding site is contributed by 14 to 21; sequence GPSAVGKG.

The protein belongs to the guanylate kinase family.

The protein resides in the cytoplasm. It catalyses the reaction GMP + ATP = GDP + ADP. In terms of biological role, essential for recycling GMP and indirectly, cGMP. This chain is Guanylate kinase, found in Symbiobacterium thermophilum (strain DSM 24528 / JCM 14929 / IAM 14863 / T).